We begin with the raw amino-acid sequence, 494 residues long: Protein DETOXIFICATION 23 (494 aa).

A disordered region spans residues 1-25 (MARREGEVTETLLKKSTENRGEDRD). A run of 12 helical transmembrane segments spans residues 40–60 (LWVV…LSLI), 74–94 (AAYS…LLGM), 123–143 (IVLT…GPIL), 158–178 (IIAL…TCQM), 188–208 (IIAY…WLLV), 223–243 (LVAH…GGCT), 268–288 (GGMI…TGNL), 297–317 (ALAI…GFMA), 340–360 (MVVV…FLFL), 384–404 (LLAF…VAVG), 416–436 (LACY…VVGL), and 441–461 (VWLG…VMTM).

Belongs to the multi antimicrobial extrusion (MATE) (TC 2.A.66.1) family.

The protein resides in the membrane. The chain is Protein DETOXIFICATION 23 from Arabidopsis thaliana (Mouse-ear cress).